A 397-amino-acid chain; its full sequence is uncharacterized protein (397 aa).

4 residues coordinate [4Fe-4S] cluster: cysteine 8, cysteine 14, cysteine 17, and cysteine 95. S-adenosyl-L-methionine contacts are provided by glutamine 229, tyrosine 258, glutamate 279, and aspartate 325. Residue cysteine 352 is the Nucleophile of the active site.

Belongs to the class I-like SAM-binding methyltransferase superfamily. RNA M5U methyltransferase family.

This is an uncharacterized protein from Chlamydia muridarum (strain MoPn / Nigg).